Here is a 517-residue protein sequence, read N- to C-terminus: Rop guanine nucleotide exchange factor 9 (517 aa).

Disordered regions lie at residues 16–76 (NLDR…SETE) and 428–517 (GEET…KDRH). A compositionally biased stretch (polar residues) spans 39 to 63 (MPESQTQDSLGGSPVETSRPMTSRL). Residues 65–429 (SRRQDKQQSE…SLARKQCTGE (365 aa)) enclose the PRONE domain. The segment covering 66–76 (RRQDKQQSETE) has biased composition (basic and acidic residues). Over residues 440–452 (ETDSASAGSSNYS) the composition is skewed to polar residues.

As to quaternary structure, interacts with ARAC11/ROP1 and ARAC10/ROP11. Interacts with PRK6. Expressed in pollen grains and pollen tubes.

Its subcellular location is the cell membrane. Guanine-nucleotide exchange factor (GEF) that acts as an activator of Rop (Rho of plants) GTPases by promoting the exchange of GDP for GTP. The chain is Rop guanine nucleotide exchange factor 9 from Arabidopsis thaliana (Mouse-ear cress).